Here is a 591-residue protein sequence, read N- to C-terminus: MKKISLPKIGIRPVIDGRRMGVRESLEEQTMNMAKATAALLTEKLRHACGAAVECVISDTCIAGMAEAAACEEKFSSQNVGLTITVTPCWCYGSETIDMDPTRPKAIWGFNGTERPGAVYLAAALAAHSQKGIPAFSIYGHDVQDADDTSIPADVEEKLLRFARAGLAVASMKGKSYLSLGGVSMGIAGSIVDHNFFESWLGMKVQAVDMTELRRRIDQKIYDEAELEMALAWADKNFRYGEDENNKQYQRNAEQSRAVLRESLLMAMCIRDMMQGNSKLADIGRVEESLGYNAIAAGFQGQRHWTDQYPNGDTAEAILNSSFDWNGVRKPFVVATENDSLNGVAMLMGHQLTGTAQIFADVRTYWSPEAIERVTGHKLDGLAEHGIIHLINSGSAALDGSCKQRDSEGKPTMKPHWEISQQEADACLAATEWCPAIHEYFRGGGYSSRFLTEGGVPFTMTRVNIIKGLGPVLQIAEGWSVELPKDVHDILNKRTNSTWPTTWFAPRLTGKGPFTDVYSVMANWGANHGVLTIGHVGADFITLASMLRIPVCMHNVEETKVYRPSAWAAHGMDIEGQDYRACQNYGPLYKR.

Catalysis depends on proton acceptor residues E337 and D361. Positions 337, 361, and 528 each coordinate Mn(2+).

It belongs to the L-fucose isomerase family. In terms of assembly, homohexamer. The cofactor is Mn(2+).

Its subcellular location is the cytoplasm. It carries out the reaction L-fucose = L-fuculose. It participates in carbohydrate degradation; L-fucose degradation; L-lactaldehyde and glycerone phosphate from L-fucose: step 1/3. Its function is as follows. Converts the aldose L-fucose into the corresponding ketose L-fuculose. The chain is L-fucose isomerase from Escherichia coli O6:K15:H31 (strain 536 / UPEC).